Consider the following 34-residue polypeptide: Small, acid-soluble spore protein M (34 aa).

Basic residues predominate over residues 1–10 (MKTRPKKAGQ). The interval 1-34 (MKTRPKKAGQQKKTESKAIDSLDKKLGGPNRPST) is disordered. Residues 12-26 (KKTESKAIDSLDKKL) show a composition bias toward basic and acidic residues.

The protein localises to the spore core. The polypeptide is Small, acid-soluble spore protein M (sspM) (Bacillus subtilis (strain 168)).